We begin with the raw amino-acid sequence, 177 residues long: ATP synthase subunit delta (177 aa).

This sequence belongs to the ATPase delta chain family. As to quaternary structure, F-type ATPases have 2 components, F(1) - the catalytic core - and F(0) - the membrane proton channel. F(1) has five subunits: alpha(3), beta(3), gamma(1), delta(1), epsilon(1). F(0) has three main subunits: a(1), b(2) and c(10-14). The alpha and beta chains form an alternating ring which encloses part of the gamma chain. F(1) is attached to F(0) by a central stalk formed by the gamma and epsilon chains, while a peripheral stalk is formed by the delta and b chains.

Its subcellular location is the cell inner membrane. Functionally, f(1)F(0) ATP synthase produces ATP from ADP in the presence of a proton or sodium gradient. F-type ATPases consist of two structural domains, F(1) containing the extramembraneous catalytic core and F(0) containing the membrane proton channel, linked together by a central stalk and a peripheral stalk. During catalysis, ATP synthesis in the catalytic domain of F(1) is coupled via a rotary mechanism of the central stalk subunits to proton translocation. In terms of biological role, this protein is part of the stalk that links CF(0) to CF(1). It either transmits conformational changes from CF(0) to CF(1) or is implicated in proton conduction. This is ATP synthase subunit delta from Aeromonas hydrophila subsp. hydrophila (strain ATCC 7966 / DSM 30187 / BCRC 13018 / CCUG 14551 / JCM 1027 / KCTC 2358 / NCIMB 9240 / NCTC 8049).